We begin with the raw amino-acid sequence, 169 residues long: Ribosome maturation factor RimM (169 aa).

Positions proline 97 to phenylalanine 169 constitute a PRC barrel domain.

The protein belongs to the RimM family. In terms of assembly, binds ribosomal protein uS19.

It localises to the cytoplasm. Its function is as follows. An accessory protein needed during the final step in the assembly of 30S ribosomal subunit, possibly for assembly of the head region. Essential for efficient processing of 16S rRNA. May be needed both before and after RbfA during the maturation of 16S rRNA. It has affinity for free ribosomal 30S subunits but not for 70S ribosomes. The chain is Ribosome maturation factor RimM from Legionella pneumophila subsp. pneumophila (strain Philadelphia 1 / ATCC 33152 / DSM 7513).